The sequence spans 291 residues: Polyamine aminopropyltransferase (291 aa).

The 241-residue stretch at 5–245 (PGPISLIEPL…YAVNYILGSL (241 aa)) folds into the PABS domain. Gln36 is an S-methyl-5'-thioadenosine binding site. His67 and Glu91 together coordinate spermidine. Residues Asp111 and 143 to 144 (DG) each bind S-methyl-5'-thioadenosine. The active-site Proton acceptor is Asp164.

Belongs to the spermidine/spermine synthase family. As to quaternary structure, homodimer or homotetramer.

The protein localises to the cytoplasm. It carries out the reaction S-adenosyl 3-(methylsulfanyl)propylamine + putrescine = S-methyl-5'-thioadenosine + spermidine + H(+). It participates in amine and polyamine biosynthesis; spermidine biosynthesis; spermidine from putrescine: step 1/1. Its function is as follows. Catalyzes the irreversible transfer of a propylamine group from the amino donor S-adenosylmethioninamine (decarboxy-AdoMet) to putrescine (1,4-diaminobutane) to yield spermidine. This Pyrobaculum neutrophilum (strain DSM 2338 / JCM 9278 / NBRC 100436 / V24Sta) (Thermoproteus neutrophilus) protein is Polyamine aminopropyltransferase.